A 381-amino-acid chain; its full sequence is Homoserine O-acetyltransferase (381 aa).

In terms of domain architecture, AB hydrolase-1 spans 47–359; sequence NAILICHALT…DKGHDAFLLD (313 aa). The Nucleophile role is filled by Ser-153. Arg-223 contacts substrate. Catalysis depends on residues Asp-320 and His-353. Position 354 (Asp-354) interacts with substrate.

This sequence belongs to the AB hydrolase superfamily. MetX family. In terms of assembly, homodimer.

It is found in the cytoplasm. It carries out the reaction L-homoserine + acetyl-CoA = O-acetyl-L-homoserine + CoA. The protein operates within amino-acid biosynthesis; L-methionine biosynthesis via de novo pathway; O-acetyl-L-homoserine from L-homoserine: step 1/1. Functionally, transfers an acetyl group from acetyl-CoA to L-homoserine, forming acetyl-L-homoserine. The chain is Homoserine O-acetyltransferase from Acidiphilium cryptum (strain JF-5).